A 429-amino-acid chain; its full sequence is Serine hydroxymethyltransferase (429 aa).

Residues Leu-126 and Gly-130–Leu-132 contribute to the (6S)-5,6,7,8-tetrahydrofolate site. At Lys-235 the chain carries N6-(pyridoxal phosphate)lysine. Ser-359–Phe-361 lines the (6S)-5,6,7,8-tetrahydrofolate pocket.

It belongs to the SHMT family. Homodimer. Requires pyridoxal 5'-phosphate as cofactor.

It is found in the cytoplasm. It carries out the reaction (6R)-5,10-methylene-5,6,7,8-tetrahydrofolate + glycine + H2O = (6S)-5,6,7,8-tetrahydrofolate + L-serine. It participates in one-carbon metabolism; tetrahydrofolate interconversion. It functions in the pathway amino-acid biosynthesis; glycine biosynthesis; glycine from L-serine: step 1/1. Functionally, catalyzes the reversible interconversion of serine and glycine with tetrahydrofolate (THF) serving as the one-carbon carrier. This reaction serves as the major source of one-carbon groups required for the biosynthesis of purines, thymidylate, methionine, and other important biomolecules. Also exhibits THF-independent aldolase activity toward beta-hydroxyamino acids, producing glycine and aldehydes, via a retro-aldol mechanism. The polypeptide is Serine hydroxymethyltransferase (Synechococcus sp. (strain WH7803)).